Here is a 137-residue protein sequence, read N- to C-terminus: Peptide methionine sulfoxide reductase MsrB (137 aa).

The 123-residue stretch at 7–129 folds into the MsrB domain; sequence PEELKNGLSE…NSASLSFTDE (123 aa). Zn(2+)-binding residues include cysteine 46, cysteine 49, cysteine 95, and cysteine 98. The active-site Nucleophile is the cysteine 118.

The protein belongs to the MsrB Met sulfoxide reductase family. It depends on Zn(2+) as a cofactor.

It carries out the reaction L-methionyl-[protein] + [thioredoxin]-disulfide + H2O = L-methionyl-(R)-S-oxide-[protein] + [thioredoxin]-dithiol. This chain is Peptide methionine sulfoxide reductase MsrB, found in Klebsiella pneumoniae subsp. pneumoniae (strain ATCC 700721 / MGH 78578).